Reading from the N-terminus, the 205-residue chain is Dephospho-CoA kinase (205 aa).

One can recognise a DPCK domain in the interval 4–203 (KIGITGGIGS…QKIHYLCSAK (200 aa)). ATP is bound at residue 12 to 17 (GSGKSV).

Belongs to the CoaE family.

The protein resides in the cytoplasm. The catalysed reaction is 3'-dephospho-CoA + ATP = ADP + CoA + H(+). It participates in cofactor biosynthesis; coenzyme A biosynthesis; CoA from (R)-pantothenate: step 5/5. Its function is as follows. Catalyzes the phosphorylation of the 3'-hydroxyl group of dephosphocoenzyme A to form coenzyme A. The chain is Dephospho-CoA kinase from Bacteroides fragilis (strain YCH46).